Reading from the N-terminus, the 226-residue chain is MNNFLLDFLALGAVLSGILVITSKNPVISVLFLISVFVNVAGYLVLLGVGFIGISYLIVYIGAVTVLFLFVIMMLNLQLTELSAVGNEYTKNLPLATIIGSLLLFELVSVVPSFDGFYQLNSTTTIFKFLGVGILNWFNSLSLGVGNTFAFAEVNQTFNTFAADTQFANFLQIQSIGQVLYTNGALWLIVSSLILLLAMVGPITLSMNKKDSSPANQVNTVNRLVK.

A run of 6 helical transmembrane segments spans residues 1–21 (MNNFLLDFLALGAVLSGILVI), 27–47 (VISVLFLISVFVNVAGYLVLL), 52–72 (IGISYLIVYIGAVTVLFLFVI), 94–114 (PLATIIGSLLLFELVSVVPSF), 126–146 (IFKFLGVGILNWFNSLSLGVG), and 185–205 (ALWLIVSSLILLLAMVGPITL).

Belongs to the complex I subunit 6 family.

Its subcellular location is the mitochondrion inner membrane. It carries out the reaction a ubiquinone + NADH + 5 H(+)(in) = a ubiquinol + NAD(+) + 4 H(+)(out). Its function is as follows. Core subunit of the mitochondrial membrane respiratory chain NADH dehydrogenase (Complex I) that is believed to belong to the minimal assembly required for catalysis. Complex I functions in the transfer of electrons from NADH to the respiratory chain. The immediate electron acceptor for the enzyme is believed to be ubiquinone. The sequence is that of NADH-ubiquinone oxidoreductase chain 6 (ND6) from Mycosarcoma maydis (Corn smut fungus).